The chain runs to 294 residues: MRFVIVTGLSGAGKTEATRSLEDLGYFCVDNLPPKLIPKFAEACVQSEGKIDKIALVIDIRGGIFFDDLFESIEYLKANDFNYEILFLEASDEVLVKRFKETRRSHPLSPDGRIITGISEERMRLRELKDRADNIIDTSNYPIRNLREKINLLYGDGKPVEQNLSITVLSFGFKYGIPSDSDLVFDVRFIPNPFYIPELKPFSGEDEPVKNYVLAQEETKGFLSRLSDMAEFLIPNYIKEGKRQLIISIGCTGGRHRSVAIANALYKDLLCKNFHVTLEHRDINEDINRGDRKL.

8 to 15 (GLSGAGKT) contacts ATP. 59–62 (DIRG) provides a ligand contact to GTP.

The protein belongs to the RapZ-like family.

In terms of biological role, displays ATPase and GTPase activities. This is Nucleotide-binding protein CPF_0343 from Clostridium perfringens (strain ATCC 13124 / DSM 756 / JCM 1290 / NCIMB 6125 / NCTC 8237 / Type A).